A 229-amino-acid chain; its full sequence is 7-cyano-7-deazaguanine synthase (229 aa).

9-19 contacts ATP; the sequence is YSGGLDSTTCM. Zn(2+) is bound by residues C189, C199, C202, and C205.

The protein belongs to the QueC family. It depends on Zn(2+) as a cofactor.

It carries out the reaction 7-carboxy-7-deazaguanine + NH4(+) + ATP = 7-cyano-7-deazaguanine + ADP + phosphate + H2O + H(+). It participates in purine metabolism; 7-cyano-7-deazaguanine biosynthesis. Catalyzes the ATP-dependent conversion of 7-carboxy-7-deazaguanine (CDG) to 7-cyano-7-deazaguanine (preQ(0)). The polypeptide is 7-cyano-7-deazaguanine synthase (Geotalea daltonii (strain DSM 22248 / JCM 15807 / FRC-32) (Geobacter daltonii)).